Reading from the N-terminus, the 212-residue chain is Peptide methionine sulfoxide reductase MsrA (212 aa).

Cys52 is a catalytic residue.

This sequence belongs to the MsrA Met sulfoxide reductase family.

The catalysed reaction is L-methionyl-[protein] + [thioredoxin]-disulfide + H2O = L-methionyl-(S)-S-oxide-[protein] + [thioredoxin]-dithiol. It catalyses the reaction [thioredoxin]-disulfide + L-methionine + H2O = L-methionine (S)-S-oxide + [thioredoxin]-dithiol. In terms of biological role, has an important function as a repair enzyme for proteins that have been inactivated by oxidation. Catalyzes the reversible oxidation-reduction of methionine sulfoxide in proteins to methionine. The chain is Peptide methionine sulfoxide reductase MsrA from Cronobacter sakazakii (strain ATCC BAA-894) (Enterobacter sakazakii).